A 426-amino-acid polypeptide reads, in one-letter code: Glutamate-1-semialdehyde 2,1-aminomutase (426 aa).

Lysine 265 is subject to N6-(pyridoxal phosphate)lysine.

The protein belongs to the class-III pyridoxal-phosphate-dependent aminotransferase family. HemL subfamily. Homodimer. Requires pyridoxal 5'-phosphate as cofactor.

It is found in the cytoplasm. The catalysed reaction is (S)-4-amino-5-oxopentanoate = 5-aminolevulinate. It participates in porphyrin-containing compound metabolism; protoporphyrin-IX biosynthesis; 5-aminolevulinate from L-glutamyl-tRNA(Glu): step 2/2. This Escherichia coli (strain K12 / DH10B) protein is Glutamate-1-semialdehyde 2,1-aminomutase.